Here is a 544-residue protein sequence, read N- to C-terminus: Esterase P (544 aa).

Positions 1–19 (MSIFKRLLCLTLLWIAALE) are cleaved as a signal peptide. A glycan (N-linked (GlcNAc...) asparagine) is linked at Asn75. A disulfide bond links Cys83 and Cys102. N-linked (GlcNAc...) asparagine glycosylation occurs at Asn114. The active-site Acyl-ester intermediate is the Ser206. Cys258 and Cys270 are disulfide-bonded. Asn262 and Asn456 each carry an N-linked (GlcNAc...) asparagine glycan. The Charge relay system role is filled by His466. Cys514 and Cys535 are oxidised to a cystine.

This sequence belongs to the type-B carboxylesterase/lipase family. As to quaternary structure, monomer.

Its subcellular location is the secreted. The enzyme catalyses a carboxylic ester + H2O = an alcohol + a carboxylate + H(+). The protein is Esterase P (Est-P) of Drosophila melanogaster (Fruit fly).